The sequence spans 445 residues: C-type lectin domain family 4 member M (445 aa).

Residues 1–49 (MSDSKEPRVQQLGLLEEDPTTSGIRLFPRDFQFQQIHGHKSSTGCLGHG) are Cytoplasmic-facing. Positions 14 to 15 (LL) match the Endocytosis signal motif. The helical; Signal-anchor for type II membrane protein transmembrane segment at 50–70 (PLVLQLLSFTLLAGVLVAILV) threads the bilayer. Over 71-445 (QVSKVPSSLS…KKPAVCFRDE (375 aa)) the chain is Extracellular. A glycan (N-linked (GlcNAc...) asparagine) is linked at Asn-92. A run of 9 repeats spans residues 108–130 (KLQEIYQELTQLKAAVGELPEKS), 131–151 (KLQEIYQELTQLKAAVGELPE), 154–176 (KLQEIYQELTQLKAAVGELPEKS), 177–199 (KLQEIYQELTQLKAAVGELPEKS), 200–222 (KLQEIYQELTQLKAAVGELPEKS), 223–245 (KLQETYQELTQLKAAVGELPEKS), 246–268 (KLQEIYQELTQLKAAVGELPEKS), 269–291 (ELQEIYQELTQLKAALGKLPDQS), and 292–314 (KQQQIYQELTDLKTAFERLCRHC). The segment at 108-315 (KLQEIYQELT…AFERLCRHCP (208 aa)) is 9 X approximate tandem repeats. Cystine bridges form between Cys-311/Cys-441, Cys-314/Cys-325, Cys-342/Cys-435, and Cys-414/Cys-427. Positions 320–436 (FFQGNCYFMS…CDIDNYWICK (117 aa)) constitute a C-type lectin domain. Residues Glu-405, Asn-407, Ser-409, Glu-412, Asn-423, and Asp-424 each coordinate Ca(2+). Asn-407 carries N-linked (GlcNAc...) asparagine glycosylation.

Homotetramer.

It localises to the membrane. In terms of biological role, probable pathogen-recognition receptor involved in peripheral immune surveillance in liver. May mediate the endocytosis of pathogens which are subsequently degraded in lysosomal compartments. Probably recognizes in a calcium-dependent manner high mannose N-linked oligosaccharides in a variety of pathogen antigens. Is a receptor for ICAM3, probably by binding to mannose-like carbohydrates. The sequence is that of C-type lectin domain family 4 member M (CLEC4M) from Pan troglodytes (Chimpanzee).